The primary structure comprises 379 residues: Queuine tRNA-ribosyltransferase (379 aa).

Residue aspartate 94 is the Proton acceptor of the active site. Residues 94 to 98, aspartate 148, glutamine 191, and glycine 218 contribute to the substrate site; that span reads DSGGF. An RNA binding region spans residues 249–255; it reads GVGSPDS. Aspartate 268 serves as the catalytic Nucleophile. The tract at residues 273–277 is RNA binding; important for wobble base 34 recognition; sequence TRIAR. Cysteine 306, cysteine 308, cysteine 311, and histidine 337 together coordinate Zn(2+).

It belongs to the queuine tRNA-ribosyltransferase family. In terms of assembly, homodimer. Within each dimer, one monomer is responsible for RNA recognition and catalysis, while the other monomer binds to the replacement base PreQ1. Requires Zn(2+) as cofactor.

It carries out the reaction 7-aminomethyl-7-carbaguanine + guanosine(34) in tRNA = 7-aminomethyl-7-carbaguanosine(34) in tRNA + guanine. The protein operates within tRNA modification; tRNA-queuosine biosynthesis. Functionally, catalyzes the base-exchange of a guanine (G) residue with the queuine precursor 7-aminomethyl-7-deazaguanine (PreQ1) at position 34 (anticodon wobble position) in tRNAs with GU(N) anticodons (tRNA-Asp, -Asn, -His and -Tyr). Catalysis occurs through a double-displacement mechanism. The nucleophile active site attacks the C1' of nucleotide 34 to detach the guanine base from the RNA, forming a covalent enzyme-RNA intermediate. The proton acceptor active site deprotonates the incoming PreQ1, allowing a nucleophilic attack on the C1' of the ribose to form the product. After dissociation, two additional enzymatic reactions on the tRNA convert PreQ1 to queuine (Q), resulting in the hypermodified nucleoside queuosine (7-(((4,5-cis-dihydroxy-2-cyclopenten-1-yl)amino)methyl)-7-deazaguanosine). The sequence is that of Queuine tRNA-ribosyltransferase from Bacillus mycoides (strain KBAB4) (Bacillus weihenstephanensis).